Reading from the N-terminus, the 78-residue chain is Acyl carrier protein (78 aa).

The 75-residue stretch at 4–78 (AEIKDKVYDI…QQAIDYIVKK (75 aa)) folds into the Carrier domain. Ser-39 is subject to O-(pantetheine 4'-phosphoryl)serine.

Belongs to the acyl carrier protein (ACP) family. 4'-phosphopantetheine is transferred from CoA to a specific serine of apo-ACP by AcpS. This modification is essential for activity because fatty acids are bound in thioester linkage to the sulfhydryl of the prosthetic group.

The protein localises to the cytoplasm. It functions in the pathway lipid metabolism; fatty acid biosynthesis. Its function is as follows. Carrier of the growing fatty acid chain in fatty acid biosynthesis. The protein is Acyl carrier protein of Chlorobium limicola (strain DSM 245 / NBRC 103803 / 6330).